Reading from the N-terminus, the 479-residue chain is Probable acyl-CoA desaturase (479 aa).

The span at 1–18 (MTAPSATAFSSATTQPTT) shows a compositional bias: low complexity. Residues 1–28 (MTAPSATAFSSATTQPTTEGNASMRKRT) form a disordered region. Topologically, residues 1-61 (MTAPSATAFS…PWTMQNWWRH (61 aa)) are cytoplasmic. Residues 62-82 (LNWLHCMLIFGLPMIAIYGVF) traverse the membrane as a helical segment. The Lumenal portion of the chain corresponds to 83 to 89 (TTPLQTK). Residues 90-110 (TLIFAIIYYAYSGLGITAGYH) traverse the membrane as a helical segment. Fe cation contacts are provided by H110, H115, H147, H150, and H151. Residues 110–115 (HRLWSH) carry the Histidine box-1 motif. The Cytoplasmic segment spans residues 111–204 (RLWSHRAYKA…DPFVMFNHRH (94 aa)). Positions 147 to 151 (HRAHH) match the Histidine box-2 motif. Residues 205–225 (FLPIASFMAFIFPSLFCGLLW) traverse the membrane as a helical segment. At 226-229 (GDYR) the chain is on the lumenal side. The helical transmembrane segment at 230–250 (GGYFYAGVCRLVFVHHATFCV) threads the bilayer. The Cytoplasmic portion of the chain corresponds to 251–479 (NSLAHLIGSQ…QPPIEAAAAN (229 aa)). The Fe cation site is built by H255, H284, H287, and H288. A Histidine box-3 motif is present at residues 284-288 (HNYHH). A Cytochrome b5 heme-binding domain is found at 357–433 (QLPVMEFEDF…LSTYRVAVVR (77 aa)). Heme contacts are provided by H390 and H416.

It belongs to the fatty acid desaturase type 1 family. It depends on Fe(2+) as a cofactor.

The protein localises to the membrane. The enzyme catalyses octadecanoyl-CoA + 2 Fe(II)-[cytochrome b5] + O2 + 2 H(+) = (9Z)-octadecenoyl-CoA + 2 Fe(III)-[cytochrome b5] + 2 H2O. Its function is as follows. Stearoyl-CoA desaturase that utilizes O(2) and electrons from reduced cytochrome b5 to introduce the first double bond into saturated fatty acyl-CoA substrates. Catalyzes the insertion of a cis double bond at the delta-9 position into fatty acyl-CoA substrates including palmitoyl-CoA and stearoyl-CoA. Contributes to the biosynthesis of membrane phospholipids, cholesterol esters and triglycerides. This chain is Probable acyl-CoA desaturase, found in Schizosaccharomyces pombe (strain 972 / ATCC 24843) (Fission yeast).